Here is a 350-residue protein sequence, read N- to C-terminus: Phosphotriesterase-related protein (350 aa).

Positions 22, 24, 169, 201, 230, and 298 each coordinate a divalent metal cation.

This sequence belongs to the metallo-dependent hydrolases superfamily. Phosphotriesterase family. A divalent metal cation serves as cofactor.

This chain is Phosphotriesterase-related protein, found in Drosophila grimshawi (Hawaiian fruit fly).